A 42-amino-acid polypeptide reads, in one-letter code: Envelope protein P10 (42 aa).

A helical transmembrane segment spans residues 20 to 40 (TTAAKIAVVYALVGLVGGLLL).

Its subcellular location is the virion membrane. Involved in cell lysis. This chain is Envelope protein P10 (P10), found in Pseudomonas savastanoi pv. phaseolicola (Pseudomonas syringae pv. phaseolicola).